Here is a 258-residue protein sequence, read N- to C-terminus: Tryptophan synthase alpha chain (258 aa).

Residues Glu-47 and Asp-58 each act as proton acceptor in the active site.

This sequence belongs to the TrpA family. Tetramer of two alpha and two beta chains.

It catalyses the reaction (1S,2R)-1-C-(indol-3-yl)glycerol 3-phosphate + L-serine = D-glyceraldehyde 3-phosphate + L-tryptophan + H2O. It functions in the pathway amino-acid biosynthesis; L-tryptophan biosynthesis; L-tryptophan from chorismate: step 5/5. In terms of biological role, the alpha subunit is responsible for the aldol cleavage of indoleglycerol phosphate to indole and glyceraldehyde 3-phosphate. The chain is Tryptophan synthase alpha chain from Bacillus cereus (strain AH820).